The chain runs to 434 residues: Nicotinate phosphoribosyltransferase (434 aa).

At histidine 242 the chain carries Phosphohistidine; by autocatalysis.

Belongs to the NAPRTase family. Transiently phosphorylated on a His residue during the reaction cycle. Phosphorylation strongly increases the affinity for substrates and increases the rate of nicotinate D-ribonucleotide production. Dephosphorylation regenerates the low-affinity form of the enzyme, leading to product release.

The catalysed reaction is nicotinate + 5-phospho-alpha-D-ribose 1-diphosphate + ATP + H2O = nicotinate beta-D-ribonucleotide + ADP + phosphate + diphosphate. It participates in cofactor biosynthesis; NAD(+) biosynthesis; nicotinate D-ribonucleotide from nicotinate: step 1/1. In terms of biological role, catalyzes the synthesis of beta-nicotinate D-ribonucleotide from nicotinate and 5-phospho-D-ribose 1-phosphate at the expense of ATP. This Bradyrhizobium diazoefficiens (strain JCM 10833 / BCRC 13528 / IAM 13628 / NBRC 14792 / USDA 110) protein is Nicotinate phosphoribosyltransferase.